The following is a 274-amino-acid chain: Large ribosomal subunit protein uL2 (274 aa).

Residues 228-254 (VDHPMGGGEGRASGGHPRSRKGLYAKG) form a disordered region. The segment covering 244-254 (PRSRKGLYAKG) has biased composition (basic residues).

Belongs to the universal ribosomal protein uL2 family. Part of the 50S ribosomal subunit. Forms a bridge to the 30S subunit in the 70S ribosome.

Functionally, one of the primary rRNA binding proteins. Required for association of the 30S and 50S subunits to form the 70S ribosome, for tRNA binding and peptide bond formation. It has been suggested to have peptidyltransferase activity; this is somewhat controversial. Makes several contacts with the 16S rRNA in the 70S ribosome. The sequence is that of Large ribosomal subunit protein uL2 from Azobacteroides pseudotrichonymphae genomovar. CFP2.